The chain runs to 182 residues: T-cell surface glycoprotein CD3 gamma chain (182 aa).

An N-terminal signal peptide occupies residues 1 to 22 (MEQGKGLAGLFLVISLLQGTMA). At 23–116 (QQKEEKHLVK…CIELNMGTVS (94 aa)) the chain is on the extracellular side. An Ig-like domain is found at 37-94 (QGDGSVLLTCDFNEKTITWLKDGHRISPPNATKSTWNLGNGAKDPRGMYQCRGAKKKS). A disulfide bridge connects residues C46 and C87. N-linked (GlcNAc...) asparagine glycosylation occurs at N66. The chain crosses the membrane as a helical span at residues 117 to 137 (GFIFAEIISIFFLAVGVYFIA). Topologically, residues 138–182 (GQDGVRQSRASDKQTLLQNEQVYQPLKDREYEQYSRLQGNQVRKK) are cytoplasmic. S145 bears the Phosphoserine mark. The residue at position 148 (S148) is a Phosphoserine; by PKC. An ITAM domain is found at 149–177 (DKQTLLQNEQVYQPLKDREYEQYSRLQGN). The Di-leucine motif signature appears at 153-154 (LL).

As to quaternary structure, the TCR-CD3 complex is composed of a CD3D/CD3E and a CD3G/CD3E heterodimers that preferentially associate with TCRalpha and TCRbeta, respectively, to form TCRalpha/CD3E/CD3G and TCRbeta/CD3G/CD3E trimers. In turn, the hexamer interacts with CD3Z homodimer to form the TCR-CD3 complex. Alternatively, TCRalpha and TCRbeta can be replaced by TCRgamma and TCRdelta. Phosphorylated on Tyr residues after T-cell receptor triggering by LCK in association with CD4/CD8. Phosphorylated also by PKC; leading to the TCR complex down-regulation. Post-translationally, phosphorylated on Tyr residues after T-cell receptor triggering by LCK in association with CD4/CD8.

Its subcellular location is the cell membrane. Part of the TCR-CD3 complex present on T-lymphocyte cell surface that plays an essential role in adaptive immune response. When antigen presenting cells (APCs) activate T-cell receptor (TCR), TCR-mediated signals are transmitted across the cell membrane by the CD3 chains CD3D, CD3E, CD3G and CD3Z. All CD3 chains contain immunoreceptor tyrosine-based activation motifs (ITAMs) in their cytoplasmic domain. Upon TCR engagement, these motifs become phosphorylated by Src family protein tyrosine kinases LCK and FYN, resulting in the activation of downstream signaling pathways. In addition to this role of signal transduction in T-cell activation, CD3G plays an essential role in the dynamic regulation of TCR expression at the cell surface. Indeed, constitutive TCR cycling is dependent on the di-leucine-based (diL) receptor-sorting motif present in CD3G. The chain is T-cell surface glycoprotein CD3 gamma chain (Cd3g) from Rattus norvegicus (Rat).